Consider the following 430-residue polypeptide: 3-phosphoshikimate 1-carboxyvinyltransferase (430 aa).

3-phosphoshikimate is bound by residues Lys-23, Ser-24, and Arg-28. Lys-23 serves as a coordination point for phosphoenolpyruvate. Phosphoenolpyruvate is bound by residues Gly-93 and Arg-121. The 3-phosphoshikimate site is built by Ser-166, Gln-168, Asp-313, and Lys-340. A phosphoenolpyruvate-binding site is contributed by Gln-168. Asp-313 (proton acceptor) is an active-site residue. The phosphoenolpyruvate site is built by Arg-344 and Arg-386.

Belongs to the EPSP synthase family. In terms of assembly, monomer.

The protein localises to the cytoplasm. The enzyme catalyses 3-phosphoshikimate + phosphoenolpyruvate = 5-O-(1-carboxyvinyl)-3-phosphoshikimate + phosphate. It participates in metabolic intermediate biosynthesis; chorismate biosynthesis; chorismate from D-erythrose 4-phosphate and phosphoenolpyruvate: step 6/7. Its function is as follows. Catalyzes the transfer of the enolpyruvyl moiety of phosphoenolpyruvate (PEP) to the 5-hydroxyl of shikimate-3-phosphate (S3P) to produce enolpyruvyl shikimate-3-phosphate and inorganic phosphate. The protein is 3-phosphoshikimate 1-carboxyvinyltransferase of Anaeromyxobacter sp. (strain Fw109-5).